A 621-amino-acid polypeptide reads, in one-letter code: GPI-anchor transamidase component GPAA1 (621 aa).

Topologically, residues 2–19 (GLLSDPVRRRALARLVLR) are cytoplasmic. Residues 20 to 41 (LNAPLCVLSYVAGIAWFLALVF) traverse the membrane as a helical segment. Residues 42-370 (PPLTQRTYMS…LLPGLSRFVS (329 aa)) lie on the Lumenal side of the membrane. A 2-acyl-6-[6-phosphoethanolamine-alpha-D-mannosyl-(1-&gt;2)-6-phosphoethanolamine-alpha-D-mannosyl-(1-&gt;6)-2-phosphoethanolamine-alpha-D-mannosyl-(1-&gt;4)-alpha-D-glucosaminyl]-1-(1-radyl,2-acyl-sn-glycero-3-phospho)-1D-myo-inositol is bound by residues Y49 and S51. N203 is a glycosylation site (N-linked (GlcNAc...) asparagine). A disulfide bond links C259 and C266. Positions 354, 355, and 356 each coordinate a 2-acyl-6-[6-phosphoethanolamine-alpha-D-mannosyl-(1-&gt;2)-6-phosphoethanolamine-alpha-D-mannosyl-(1-&gt;6)-2-phosphoethanolamine-alpha-D-mannosyl-(1-&gt;4)-alpha-D-glucosaminyl]-1-(1-radyl,2-acyl-sn-glycero-3-phospho)-1D-myo-inositol. Q355 serves as a coordination point for Mg(2+). Residues 371–393 (IGLYMPAVGFLLLVLGLKALELW) form a helical membrane-spanning segment. The Cytoplasmic segment spans residues 394–425 (MQLHEAGMGLEEPGGAPGPSVPLPPSQGVGLA). The helical transmembrane segment at 426-450 (SLVAPLLISQAMGLALYVLPVLGQH) threads the bilayer. At 451-462 (VATQHFPVAEAE) the chain is on the lumenal side. A helical membrane pass occupies residues 463–483 (AVVLTLLAIYAAGLALPHNTH). Topologically, residues 484-495 (RVVSTQAPDRGW) are cytoplasmic. Transmembrane regions (helical) follow at residues 496–519 (MALKLVALIYLALQLGCIALTNFS) and 520–536 (LGFLLATTMVPTAALAK). Topologically, residues 537–540 (PHGP) are cytoplasmic. The helical transmembrane segment at 541–563 (RTLYAALLVLTSPAATLLGSLFL) threads the bilayer. The Lumenal portion of the chain corresponds to 564–597 (WRELQEAPLSLAEGWQLFLAALAQGVLEHHTYGA). A helical transmembrane segment spans residues 598–619 (LLFPLLSLGLYPCWLLFWNVLF). At 620–621 (WK) the chain is on the cytoplasmic side.

Heteropentamer. Part of the GPI-anchor transamidase complex, consisting of PIGK, PIGT, PIGS, PIGU and GAA1. Interacts with PIGK. In terms of tissue distribution, ubiquitously expressed in fetal and adult tissues. Expressed at higher levels in fetal tissues than adult tissues.

It localises to the endoplasmic reticulum membrane. The protein operates within glycolipid biosynthesis; glycosylphosphatidylinositol-anchor biosynthesis. Component of the glycosylphosphatidylinositol-anchor (GPI-anchor) transamidase (GPI-T) complex that catalyzes the formation of the linkage between a proprotein and a GPI-anchor and participates in GPI anchored protein biosynthesis. Binds GPI-anchor. This is GPI-anchor transamidase component GPAA1 from Homo sapiens (Human).